Here is a 302-residue protein sequence, read N- to C-terminus: Taste receptor type 2 member 104 (302 aa).

Topologically, residues 1–7 are extracellular; the sequence is MLSMLES. A helical membrane pass occupies residues 8 to 28; the sequence is ILLSVATSEAMLGILGNIFIV. The Cytoplasmic segment spans residues 29-43; it reads LVNCTNWVRNKKLSK. A helical transmembrane segment spans residues 44–64; it reads INFILTGLAISRVFTIWIITL. At 65-87 the chain is on the extracellular side; that stretch reads DAYTKVFFLTTLMPSNLHECISY. The chain crosses the membrane as a helical span at residues 88–108; it reads IWVIINHLSVWFATSLSIFYF. At 109–128 the chain is on the cytoplasmic side; sequence LKIANFSHYIFLWLKRRADK. A helical transmembrane segment spans residues 129-149; sequence VFVFLIGYLIITWLASFPLAV. Over 150–182 the chain is Extracellular; the sequence is TVIKNIKVHHNNTSWLIQLEKRELLINYVFANM. N-linked (GlcNAc...) asparagine glycosylation is found at Asn-160 and Asn-161. The chain crosses the membrane as a helical span at residues 183-203; the sequence is GPISLFMVAVFTCFLLTISLW. The Cytoplasmic segment spans residues 204-233; sequence RHRRRMQSTGSKFRDLNTEVHVKAMKVLIS. Residues 234 to 254 form a helical membrane-spanning segment; sequence FIILFILYFMGVLIETLCLFL. The Extracellular portion of the chain corresponds to 255–257; it reads TEN. Residues 258-278 form a helical membrane-spanning segment; the sequence is ILLFIFGFTLSSTYPCCHSFI. Topologically, residues 279–302 are cytoplasmic; sequence LILTSRELKQASMRALQRLKCCET.

This sequence belongs to the G-protein coupled receptor T2R family.

The protein localises to the membrane. Its function is as follows. Putative taste receptor which may play a role in the perception of bitterness. In Rattus norvegicus (Rat), this protein is Taste receptor type 2 member 104.